A 293-amino-acid chain; its full sequence is Cep170-like protein (293 aa).

2 disordered regions span residues 78-110 and 217-270; these read PPLV…LTIT and FPSA…AESE. The span at 227–245 shows a compositional bias: polar residues; the sequence is KQKSSPVNNHHSPGQTPTL.

This sequence belongs to the CEP170 family.

This chain is Cep170-like protein (CEP170P1), found in Homo sapiens (Human).